A 413-amino-acid polypeptide reads, in one-letter code: Gamma-lactamase FDB1 (413 aa).

Zn(2+)-binding residues include histidine 126, histidine 128, aspartate 130, histidine 131, histidine 211, aspartate 235, and histidine 323.

The protein belongs to the metallo-beta-lactamase superfamily.

It functions in the pathway xenobiotic degradation. Gamma-lactamase; part of the Fusarium detoxification of benzoxazolinone cluster involved in the degradation of benzoxazolinones produced by the host plant. Maize, wheat, and rye produce the 2 benzoxazinone phytoanticipins 2,4-dihy-droxy-7-methoxy-1,4-benzoxazin-3-one (DIMBOA) and 2,4-dihydroxy-1,4-benzoxazin-3-one (DIBOA) that, due to their inherent instability once released, spontaneously degrade to the more stable corresponding benzoxazolinones, 6-methoxy-2-benzoxazolinone (MBOA) and 2-benzoxazolinone (BOA), respectively. The first step in the detoxification of benzoxazolinones involves the hydrolysis of the cyclic ester bond of benzoxazolinones by the gamma-lactamase FDB1 to aminophenols. FDB1 is able to convert BOA into 2-aminophenol (2-AP), as well as MBOA into 5-methoxy-2-aminophenol (2-AMP). The N-malonyltransferase FDB2 then metabolizes aminophenols via N-malonylation to non-toxic malonamic acids. FDB2 converts 2-AP into N-(2-hydroxyphenyl) malonamic acid (HPMA) and 2-AMP into N-(2-hydroxy-4-methoxyphenyl) malonamic acid (HMPMA). The cluster also contains 2 transcription factors (FDB3 and FPSE_08121), an aldo-keto reductase (FPSE_08125) that possibly associates with a ketone component of BOA and MBOA degradation, an esterase (FPSE_08126), an acyl-CoA transferase (FPSE_08120), a solute carrier protein (FPSE_08119) and a transmembrane transporter (FPSE_08127) proposed to shuttle metabolites of benzoxazolinone degradation. In Fusarium pseudograminearum (strain CS3096) (Wheat and barley crown-rot fungus), this protein is Gamma-lactamase FDB1.